We begin with the raw amino-acid sequence, 80 residues long: UPF0057 membrane protein ZK632.10 (80 aa).

A run of 2 helical transmembrane segments spans residues 4 to 24 (ILLAILAIFLPPIAVLLDVGC) and 32 to 52 (ILLTCLGIIPGIIHAWYIILC).

This sequence belongs to the UPF0057 (PMP3) family.

It localises to the membrane. The chain is UPF0057 membrane protein ZK632.10 from Caenorhabditis elegans.